A 181-amino-acid polypeptide reads, in one-letter code: Isopentenyl-diphosphate Delta-isomerase (181 aa).

H25 and H32 together coordinate Mn(2+). Residues 30–164 enclose the Nudix hydrolase domain; sequence LLHLAFSCWL…PWAFSPWMVL (135 aa). The active site involves C67. H69 lines the Mn(2+) pocket. Residue E87 participates in Mg(2+) binding. Mn(2+) is bound by residues E114 and E116. E116 is a catalytic residue.

Belongs to the IPP isomerase type 1 family. As to quaternary structure, homodimer. Mg(2+) serves as cofactor. The cofactor is Mn(2+).

Its subcellular location is the cytoplasm. It catalyses the reaction isopentenyl diphosphate = dimethylallyl diphosphate. The protein operates within isoprenoid biosynthesis; dimethylallyl diphosphate biosynthesis; dimethylallyl diphosphate from isopentenyl diphosphate: step 1/1. In terms of biological role, catalyzes the 1,3-allylic rearrangement of the homoallylic substrate isopentenyl (IPP) to its highly electrophilic allylic isomer, dimethylallyl diphosphate (DMAPP). This chain is Isopentenyl-diphosphate Delta-isomerase, found in Citrobacter koseri (strain ATCC BAA-895 / CDC 4225-83 / SGSC4696).